Reading from the N-terminus, the 370-residue chain is MKFFCVAGLLASAAAFQAQPAAFTTYSPAVGGATSNVFSESSSPAHRNRRATIVMDGKANAIRDRITSVKNTKKITMAMKLVAAAKVRRAQDAVLATRPFSETLQSVFGGLIARMGGEALDLPLLTQREVSKVTLVVITGDRGLCGGYNSFMIKKAEARFNELKDQGVACDMVLIGKKGITYFQRRGYPIRKTFETGQNPDSKQALAISEELLNTYLSGESDAVELLYTKFISLIASSPSARTLIPFSASEITQQGDEVFQLTSSGGDFEVERTELEVAEPQDFPNDMIFEQDPIQIINSILPLYLNGQILRTLQESVASELAARMQSMQSASDNAGDLAKRLSTEYNRARQAAVTQEILEIVSGASALE.

The N-terminal 55 residues, 1–55 (MKFFCVAGLLASAAAFQAQPAAFTTYSPAVGGATSNVFSESSSPAHRNRRATIVM), are a transit peptide targeting the chloroplast. C145 is a catalytic residue.

Belongs to the ATPase gamma chain family. In terms of assembly, F-type ATPases have 2 components, CF(1) - the catalytic core - and CF(0) - the membrane proton channel. CF(1) has five subunits: alpha(3), beta(3), gamma(1), delta(1), epsilon(1). CF(0) has four main subunits: a, b, b' and c.

Its subcellular location is the plastid. It localises to the chloroplast thylakoid membrane. In terms of biological role, produces ATP from ADP in the presence of a proton gradient across the membrane. The gamma chain is believed to be important in regulating ATPase activity and the flow of protons through the CF(0) complex. The protein is ATP synthase gamma chain, chloroplastic (ATPC) of Trieres chinensis (Marine centric diatom).